A 147-amino-acid polypeptide reads, in one-letter code: Nucleoside diphosphate kinase (147 aa).

6 residues coordinate ATP: K11, F59, R87, T93, R104, and N114. Catalysis depends on H117, which acts as the Pros-phosphohistidine intermediate.

It belongs to the NDK family. As to quaternary structure, homotetramer. Requires Mg(2+) as cofactor.

The protein resides in the cytoplasm. The enzyme catalyses a 2'-deoxyribonucleoside 5'-diphosphate + ATP = a 2'-deoxyribonucleoside 5'-triphosphate + ADP. The catalysed reaction is a ribonucleoside 5'-diphosphate + ATP = a ribonucleoside 5'-triphosphate + ADP. Functionally, major role in the synthesis of nucleoside triphosphates other than ATP. The ATP gamma phosphate is transferred to the NDP beta phosphate via a ping-pong mechanism, using a phosphorylated active-site intermediate. The polypeptide is Nucleoside diphosphate kinase (Anaeromyxobacter sp. (strain K)).